The sequence spans 188 residues: Putative manganese efflux pump MntP (188 aa).

Helical transmembrane passes span 1–21, 40–60, 64–84, 105–127, 131–153, and 166–186; these read MLIQ…AVSI, LWFG…ASTF, VTAV…GNMV, HMLP…FAFM, IWLS…LYIG, and IAGG…HLGF.

It belongs to the MntP (TC 9.B.29) family.

The protein localises to the cell membrane. Its function is as follows. Probably functions as a manganese efflux pump. The protein is Putative manganese efflux pump MntP of Bifidobacterium adolescentis (strain ATCC 15703 / DSM 20083 / NCTC 11814 / E194a).